The sequence spans 238 residues: Ribonuclease PH (238 aa).

Residues Arg-86 and 124–126 contribute to the phosphate site; that span reads GTR.

It belongs to the RNase PH family. In terms of assembly, homohexameric ring arranged as a trimer of dimers.

The catalysed reaction is tRNA(n+1) + phosphate = tRNA(n) + a ribonucleoside 5'-diphosphate. Phosphorolytic 3'-5' exoribonuclease that plays an important role in tRNA 3'-end maturation. Removes nucleotide residues following the 3'-CCA terminus of tRNAs; can also add nucleotides to the ends of RNA molecules by using nucleoside diphosphates as substrates, but this may not be physiologically important. Probably plays a role in initiation of 16S rRNA degradation (leading to ribosome degradation) during starvation. In Shigella boydii serotype 18 (strain CDC 3083-94 / BS512), this protein is Ribonuclease PH.